Here is an 804-residue protein sequence, read N- to C-terminus: Angiotensin-converting enzyme 2 (804 aa).

The signal sequence occupies residues 1–17; that stretch reads MTGSFWLLLSLVAVTAA. Residues 18–739 lie on the Extracellular side of the membrane; the sequence is QSTTEEQAKT…LGPPYEPPVT (722 aa). Residues 19 to 606 form the Peptidase M2 domain; the sequence is STTEEQAKTF…QNRNSFVGWS (588 aa). N-linked (GlcNAc...) asparagine glycans are attached at residues Asn53 and Asn90. Arg168 is a chloride binding site. Arg272 provides a ligand contact to substrate. N-linked (GlcNAc...) asparagine glycosylation is present at Asn298. A disulfide bridge connects residues Cys343 and Cys360. 344 to 345 contributes to the substrate binding site; the sequence is HP. His373 serves as a coordination point for Zn(2+). Catalysis depends on Glu374, which acts as the Proton acceptor. The Zn(2+) site is built by His377 and Glu401. Asn431 carries N-linked (GlcNAc...) asparagine glycosylation. Chloride-binding residues include Trp476 and Lys480. His504 serves as the catalytic Proton donor. Tyr514 lines the substrate pocket. Cysteines 529 and 541 form a disulfide. Asn545 carries an N-linked (GlcNAc...) asparagine glycan. Residues 613–804 enclose the Collectrin-like domain; that stretch reads SDQSIKVRIS…QNIDDVQTSL (192 aa). The segment at 651-658 is essential for cleavage by ADAM17; it reads RKYFSEAR. 2 N-linked (GlcNAc...) asparagine glycosylation sites follow: Asn659 and Asn689. The interval 696-715 is essential for cleavage by TMPRSS11D and TMPRSS2; the sequence is RTEVENAIRLSRDRINDVFQ. Residues 740-760 traverse the membrane as a helical segment; that stretch reads IWLIIFGVVMGVVVIGIVVLI. The Cytoplasmic segment spans residues 761-804; the sequence is FTGIRNRRKKNQASSEENPYGSVDLNKGENNSGFQNIDDVQTSL. The disordered stretch occupies residues 771–804; it reads NQASSEENPYGSVDLNKGENNSGFQNIDDVQTSL. The LIR signature appears at 777-785; that stretch reads ENPYGSVDL. Residue Tyr780 is modified to Phosphotyrosine. Positions 780-783 match the Endocytic sorting signal motif; sequence YGSV. Positions 780–784 match the SH2-binding motif; it reads YGSVD. The residue at position 782 (Ser782) is a Phosphoserine. Lys787 participates in a covalent cross-link: Glycyl lysine isopeptide (Lys-Gly) (interchain with G-Cter in ubiquitin). The segment covering 788–804 has biased composition (polar residues); the sequence is GENNSGFQNIDDVQTSL. Positions 791–794 match the PTB motif; that stretch reads NSGF. Positions 802-804 match the PDZ-binding motif; that stretch reads TSL.

It belongs to the peptidase M2 family. Homodimer. Interacts with the catalytically active form of TMPRSS2. Interacts with SLC6A19; this interaction is essential for expression and function of SLC6A19 in intestine. Interacts with ITGA5:ITGB1. Probably interacts (via endocytic sorting signal motif) with AP2M1; the interaction is inhibited by phosphorylation of Tyr-780. Interacts (via PDZ-binding motif) with NHERF1 (via PDZ domains); the interaction may enhance ACE2 membrane residence. It depends on Zn(2+) as a cofactor. Requires chloride as cofactor. In terms of processing, proteolytic cleavage by ADAM17 generates a secreted form. Also cleaved by serine proteases: TMPRSS2, TMPRSS11D and HPN/TMPRSS1. Phosphorylated. Phosphorylation at Tyr-780 probably inhibits interaction with AP2M1 and enables interactions with proteins containing SH2 domains. Post-translationally, ubiquitinated. Ubiquitinated on Lys-787 via 'Lys-48'-linked ubiquitin. 'Lys-48'-linked deubiquitinated by USP50 on the Lys-787; leading to its stabilization.

It is found in the secreted. Its subcellular location is the cell membrane. The protein localises to the cytoplasm. It localises to the cell projection. The protein resides in the cilium. It is found in the apical cell membrane. The catalysed reaction is angiotensin II + H2O = angiotensin-(1-7) + L-phenylalanine. The enzyme catalyses angiotensin I + H2O = angiotensin-(1-9) + L-leucine. It catalyses the reaction bradykinin(1-8) + H2O = bradykinin(1-7) + L-phenylalanine. It carries out the reaction neurotensin + H2O = neurotensin-(1-12) + L-leucine. The catalysed reaction is kinetensin + H2O = kinetensin-(1-8) + L-leucine. The enzyme catalyses dynorphin A-(1-13) + H2O = dynorphin A-(1-12) + L-lysine. It catalyses the reaction apelin-13 + H2O = apelin-12 + L-phenylalanine. It carries out the reaction [Pyr1]apelin-13 + H2O = [Pyr1]apelin-12 + L-phenylalanine. The catalysed reaction is apelin-17 + H2O = apelin-16 + L-phenylalanine. Essential counter-regulatory carboxypeptidase of the renin-angiotensin hormone system that is a critical regulator of blood volume, systemic vascular resistance, and thus cardiovascular homeostasis. Converts angiotensin I to angiotensin 1-9, a nine-amino acid peptide with anti-hypertrophic effects in cardiomyocytes, and angiotensin II to angiotensin 1-7, which then acts as a beneficial vasodilator and anti-proliferation agent, counterbalancing the actions of the vasoconstrictor angiotensin II. Also removes the C-terminal residue from three other vasoactive peptides, neurotensin, kinetensin, and des-Arg bradykinin, but is not active on bradykinin. Also cleaves other biological peptides, such as apelins, casomorphins and dynorphin A. Plays an important role in amino acid transport by acting as binding partner of amino acid transporter SLC6A19 in intestine, regulating trafficking, expression on the cell surface, and its catalytic activity. This is Angiotensin-converting enzyme 2 (ACE2) from Bos taurus (Bovine).